Reading from the N-terminus, the 232-residue chain is Orotidine 5'-phosphate decarboxylase (232 aa).

Substrate-binding positions include Asp-13, Lys-35, Asp-62–Thr-71, Thr-122, Arg-182, Gln-191, Gly-211, and Arg-212. The active-site Proton donor is Lys-64.

Belongs to the OMP decarboxylase family. Type 1 subfamily. Homodimer.

The catalysed reaction is orotidine 5'-phosphate + H(+) = UMP + CO2. It functions in the pathway pyrimidine metabolism; UMP biosynthesis via de novo pathway; UMP from orotate: step 2/2. In terms of biological role, catalyzes the decarboxylation of orotidine 5'-monophosphate (OMP) to uridine 5'-monophosphate (UMP). The sequence is that of Orotidine 5'-phosphate decarboxylase from Pseudomonas aeruginosa (strain LESB58).